Consider the following 209-residue polypeptide: Probable GTP-binding protein EngB (209 aa).

One can recognise an EngB-type G domain in the interval Ile12–Asp203. GTP is bound by residues Gly20–Ser27, Gly45–Arg49, Asp62–Gly65, Asn142–Asp145, and Ile179–Ala181. Mg(2+) is bound by residues Ser27 and Thr47.

It belongs to the TRAFAC class TrmE-Era-EngA-EngB-Septin-like GTPase superfamily. EngB GTPase family. It depends on Mg(2+) as a cofactor.

In terms of biological role, necessary for normal cell division and for the maintenance of normal septation. The protein is Probable GTP-binding protein EngB of Methanosarcina mazei (strain ATCC BAA-159 / DSM 3647 / Goe1 / Go1 / JCM 11833 / OCM 88) (Methanosarcina frisia).